A 67-amino-acid polypeptide reads, in one-letter code: Cold shock protein ScoF (67 aa).

A CSD domain is found at 4-64 (GTVKWFNSEK…GQKGPQAENI (61 aa)).

Its subcellular location is the cytoplasm. The chain is Cold shock protein ScoF (scoF) from Streptomyces coelicolor (strain ATCC BAA-471 / A3(2) / M145).